The sequence spans 302 residues: Tritrans,polycis-undecaprenyl-diphosphate synthase (geranylgeranyl-diphosphate specific) (302 aa).

Asp33 is a catalytic residue. A Mg(2+)-binding site is contributed by Asp33. Residues 34–37 (GNRR) and 78–80 (STE) contribute to the substrate site. The active-site Proton acceptor is Asn81. Residues Phe82, Arg84, Arg203, and 209–211 (RTS) each bind substrate.

The protein belongs to the UPP synthase family. In terms of assembly, homodimer. Mg(2+) is required as a cofactor.

The enzyme catalyses geranylgeranyl diphosphate + 7 isopentenyl diphosphate = tri-trans,hepta-cis-undecaprenyl diphosphate + 7 diphosphate. Catalyzes the sequential condensation of isopentenyl diphosphate (IPP) with geranylgeranyl diphosphate (GGPP) to yield (2Z,6Z,10Z,14Z,18Z,22Z,26Z,30E,34E,38E)-undecaprenyl diphosphate (tritrans,heptacis-UPP). It is probably the precursor of glycosyl carrier lipids. In Halobacterium salinarum (strain ATCC 700922 / JCM 11081 / NRC-1) (Halobacterium halobium), this protein is Tritrans,polycis-undecaprenyl-diphosphate synthase (geranylgeranyl-diphosphate specific).